The chain runs to 368 residues: Peptide chain release factor 2 (368 aa).

At Q250 the chain carries N5-methylglutamine.

This sequence belongs to the prokaryotic/mitochondrial release factor family. Methylated by PrmC. Methylation increases the termination efficiency of RF2.

The protein localises to the cytoplasm. In terms of biological role, peptide chain release factor 2 directs the termination of translation in response to the peptide chain termination codons UGA and UAA. This chain is Peptide chain release factor 2, found in Rickettsia conorii (strain ATCC VR-613 / Malish 7).